We begin with the raw amino-acid sequence, 791 residues long: MLMATPTSRASLNLLRRSPKPKYFSSSSCHFRPSTFRKSYPCPIWSSSFSFCLPPPRSTTSTSLSSSSFRPFSSPPSMSSAAAAAVESVVSDETLSSNPLLQDFDFPPFDSVDASHVRPGIRALLQHLEAELEELEKSVEPTWPKLVEPLEKIVDRLTVVWGMINHLKAVKDTPELRAAIEDVQPEKVKFQLRLGQSKPIYNAFKAIRESPDWSSLSEARQRLVEAQIKEAVLIGIALDDEKREEFNKIEQELEKLSHKFSENVLDATKKFEKLITDKKEIEGLPPSALGLFAQAAVSKGHENATAENGPWIITLDAPSYLPVMQHAKNRALREEVYRAYLSRASSGDLDNTAIIDQILKLRLEKAKLLGYNNYAEVSMAMKMATVEKAAELLEKLRSASWDAAVQDMEDLKSFAKNQGAAESDSMTHWDTTFWSERLRESKYDINEEELRPYFSLPKVMDGLFSLAKTLFGIDIEPADGLAPVWNNDVRFYRVKDSSGNPIAYFYFDPYSRPSEKRGGAWMDEVVSRSRVMAQKGSSVRLPVAHMVCNQTPPVGDKPSLMTFREVETVFHEFGHALQHMLTKQDEGLVAGIRNIEWDAVELPSQFMENWCYHRDTLMSIAKHYETGETLPEEVYKKLLAARTFRAGSFSLRQLKFASVDLELHTKYVPGGPESIYDVDQRVSVKTQVIPPLPEDRFLCSFSHIFAGGYAAGYYSYKWAEVLSADAFSAFEDAGLDDIKAVKETGQRFRNTILALGGGKAPLKVFVEFRGREPSPEPLLRHNGLLAASASA.

A chloroplast and mitochondrion-targeting transit peptide spans 1–82 (MLMATPTSRA…SSPPSMSSAA (82 aa)). Coiled coils occupy residues 118–138 (RPGI…LEKS) and 239–259 (DDEK…LSHK). Histidine 571 contributes to the Zn(2+) binding site. Glutamate 572 is a catalytic residue. Residues histidine 575 and glutamate 601 each contribute to the Zn(2+) site. Residue 703–709 (HIFAGGY) coordinates substrate.

It belongs to the peptidase M3 family. It depends on Zn(2+) as a cofactor.

It localises to the mitochondrion matrix. It is found in the plastid. The protein resides in the chloroplast stroma. It carries out the reaction Hydrolysis of oligopeptides, with broad specificity. Gly or Ala commonly occur as P1 or P1' residues, but more distant residues are also important, as is shown by the fact that Z-Gly-Pro-Gly-|-Gly-Pro-Ala is cleaved, but not Z-(Gly)(5).. With respect to regulation, inhibited by salicylic acid. Its function is as follows. Oligopeptidase degrading short peptides from 8 to 23 amino acid residues. Plays a role in the degradation of transit peptides and of peptides derived from other proteolytic events. Does not exhibit a strict cleavage pattern. Binds salicylic acid. The sequence is that of Organellar oligopeptidase A, chloroplastic/mitochondrial from Arabidopsis thaliana (Mouse-ear cress).